The sequence spans 320 residues: D-alanine--D-alanine ligase (320 aa).

The region spanning 104–308 (KRVCLSHGVP…YEDLCVEILR (205 aa)) is the ATP-grasp domain. 134 to 189 (AAEFGMPLMLKAPHEGSTIGIAKVETAEGMQAGFDLCAKYDDVVLVEQFVKGRELT) lines the ATP pocket. Residues Asp261, Glu275, and Asn277 each contribute to the Mg(2+) site.

The protein belongs to the D-alanine--D-alanine ligase family. The cofactor is Mg(2+). Requires Mn(2+) as cofactor.

It is found in the cytoplasm. It catalyses the reaction 2 D-alanine + ATP = D-alanyl-D-alanine + ADP + phosphate + H(+). The protein operates within cell wall biogenesis; peptidoglycan biosynthesis. In terms of biological role, cell wall formation. This chain is D-alanine--D-alanine ligase, found in Janthinobacterium sp. (strain Marseille) (Minibacterium massiliensis).